The chain runs to 534 residues: Acyl-CoA-binding domain-containing protein 5 (534 aa).

Positions H41–M130 constitute an ACB domain. I52–F61 is an an acyl-CoA binding site. Residue P63 is modified to Phosphothreonine. An acyl-CoA-binding positions include Y72–K76, K98, and Y117. Phosphothreonine is present on residues L137 and E172. Positions T181–S225 are disordered. Positions K190–K219 form a coiled coil. Phosphoserine is present on residues S193, S194, S196, S200, S215, S279, and S313. Basic and acidic residues predominate over residues E207–S225. The segment covering E376 to R385 has biased composition (basic and acidic residues). Positions E376–R442 are disordered. T400 is modified (phosphothreonine). At S428 the chain carries Phosphoserine. The segment covering D431 to S441 has biased composition (basic and acidic residues). Residues E447–L476 are a coiled coil. The residue at position 469 (K469) is an N6-acetyllysine. A helical transmembrane segment spans residues G506–Y526.

It belongs to the ATG37 family.

It is found in the peroxisome membrane. In terms of biological role, acyl-CoA binding protein which acts as the peroxisome receptor for pexophagy but is dispensable for aggrephagy and nonselective autophagy. Binds medium- and long-chain acyl-CoA esters. This Homo sapiens (Human) protein is Acyl-CoA-binding domain-containing protein 5 (ACBD5).